The primary structure comprises 219 residues: Putative zinc metalloprotease YwhC (219 aa).

Residues 4 to 24 (FLYYPLSLMPYLVITLIVSFT) form a helical membrane-spanning segment. His-26 contacts Zn(2+). Residue Glu-27 is part of the active site. A Zn(2+)-binding site is contributed by His-30. A run of 4 helical transmembrane segments spans residues 52-72 (PIKH…FGWA), 94-114 (IAGP…LVLM), 132-152 (FFSI…LPLP), and 180-200 (FIVF…WPML).

Belongs to the peptidase M50B family. The cofactor is Zn(2+).

The protein localises to the cell membrane. In Bacillus subtilis (strain 168), this protein is Putative zinc metalloprotease YwhC (ywhC).